The following is a 632-amino-acid chain: DNA mismatch repair protein MutL (632 aa).

The interval 376–397 (EQPQAEPRQSFTPGSGAGSGYQ) is disordered.

The protein belongs to the DNA mismatch repair MutL/HexB family.

In terms of biological role, this protein is involved in the repair of mismatches in DNA. It is required for dam-dependent methyl-directed DNA mismatch repair. May act as a 'molecular matchmaker', a protein that promotes the formation of a stable complex between two or more DNA-binding proteins in an ATP-dependent manner without itself being part of a final effector complex. This chain is DNA mismatch repair protein MutL, found in Pseudomonas entomophila (strain L48).